A 174-amino-acid chain; its full sequence is Transcription antitermination protein NusB (174 aa).

Belongs to the NusB family.

In terms of biological role, involved in transcription antitermination. Required for transcription of ribosomal RNA (rRNA) genes. Binds specifically to the boxA antiterminator sequence of the ribosomal RNA (rrn) operons. This chain is Transcription antitermination protein NusB, found in Rhodopseudomonas palustris (strain TIE-1).